Here is an 877-residue protein sequence, read N- to C-terminus: Ewing's tumor-associated antigen 1 homolog (877 aa).

The segment at 1–82 (MQLKDGGTGM…GRSPRGKETP (82 aa)) is disordered. Over residues 56 to 65 (AGTRSARRAQ) the composition is skewed to basic residues. Residue lysine 87 forms a Glycyl lysine isopeptide (Lys-Gly) (interchain with G-Cter in SUMO2) linkage. Positions 107–113 (IFWDQNS) match the ATR-activation domain (AAD) motif. Coiled coils occupy residues 185–213 (KTKNREKELMKLAQQFDKNMEELDVIQEQ) and 306–335 (AFLNNSKTSLRKKNALLQEEIITTETLLTE). Residues lysine 416 and lysine 444 each participate in a glycyl lysine isopeptide (Lys-Gly) (interchain with G-Cter in SUMO2) cross-link. The tract at residues 450 to 479 (PSKTRNGELRNAGEHRFSSHPGDESRKVPF) is disordered. Over residues 454-476 (RNGELRNAGEHRFSSHPGDESRK) the composition is skewed to basic and acidic residues. Residue serine 467 is modified to Phosphoserine. A Glycyl lysine isopeptide (Lys-Gly) (interchain with G-Cter in SUMO2) cross-link involves residue lysine 510. The short motif at 607–622 (GEVDDDLFCQACDDIE) is the RBM1 motif element. 2 disordered regions span residues 626–664 (QQENKGSEESESVSYTSTRGSRSSSTASKQASQSAPSKH) and 818–877 (ANQQ…ISLP). Low complexity predominate over residues 637 to 662 (SVSYTSTRGSRSSSTASKQASQSAPS). The span at 818 to 833 (ANQQQSSINYSESLKP) shows a compositional bias: polar residues. The span at 840–859 (ERNRKYSPEEIQRKRQEALV) shows a compositional bias: basic and acidic residues. Positions 843 to 865 (RKYSPEEIQRKRQEALVRRKAKA) match the RBM2 motif motif. A compositionally biased stretch (polar residues) spans 868–877 (TVQSAPISLP).

As to quaternary structure, interacts (via RBM1 motif) with RPA1. Interacts (via RBM2 motif) with RPA2. Interacts (via the ATR-activation domain motif) with ATR. Post-translationally, phosphorylated by ATR.

It is found in the nucleus. Its function is as follows. Replication stress response protein that accumulates at DNA damage sites and promotes replication fork progression and integrity. Recruited to stalled replication forks via interaction with the RPA complex and directly stimulates ATR kinase activity independently of TOPBP1. Probably only regulates a subset of ATR targets. The chain is Ewing's tumor-associated antigen 1 homolog from Mus musculus (Mouse).